The chain runs to 269 residues: Phosphate import ATP-binding protein PstB 2 (269 aa).

The ABC transporter domain occupies 23-264 (LHTEDLHVFY…PKIQATEDYV (242 aa)). 55 to 62 (GPSGCGKS) serves as a coordination point for ATP.

It belongs to the ABC transporter superfamily. Phosphate importer (TC 3.A.1.7) family. The complex is composed of two ATP-binding proteins (PstB), two transmembrane proteins (PstC and PstA) and a solute-binding protein (PstS).

It is found in the cell membrane. The enzyme catalyses phosphate(out) + ATP + H2O = ADP + 2 phosphate(in) + H(+). Functionally, part of the ABC transporter complex PstSACB involved in phosphate import. Responsible for energy coupling to the transport system. This Enterococcus faecalis (strain ATCC 700802 / V583) protein is Phosphate import ATP-binding protein PstB 2.